A 291-amino-acid polypeptide reads, in one-letter code: UPF0173 metal-dependent hydrolase Rmet_5695 (291 aa).

Belongs to the UPF0173 family.

The chain is UPF0173 metal-dependent hydrolase Rmet_5695 from Cupriavidus metallidurans (strain ATCC 43123 / DSM 2839 / NBRC 102507 / CH34) (Ralstonia metallidurans).